Reading from the N-terminus, the 222-residue chain is Small ribosomal subunit protein uS3 (222 aa).

The 70-residue stretch at 39–108 (IRKFVKNKLS…NVLINIVEVK (70 aa)) folds into the KH type-2 domain.

Belongs to the universal ribosomal protein uS3 family. As to quaternary structure, part of the 30S ribosomal subunit. Forms a tight complex with proteins S10 and S14.

Binds the lower part of the 30S subunit head. Binds mRNA in the 70S ribosome, positioning it for translation. The sequence is that of Small ribosomal subunit protein uS3 from Clostridium acetobutylicum (strain ATCC 824 / DSM 792 / JCM 1419 / IAM 19013 / LMG 5710 / NBRC 13948 / NRRL B-527 / VKM B-1787 / 2291 / W).